We begin with the raw amino-acid sequence, 191 residues long: MLLFPGTFTMQTDYAELVRRTIRSVPDWPTPGVTFRDITPVLQDPRTFRVLIDLFVYRYMRQRLDLVAGVDARGFIVGAVLAHELNLGFVPVRKKGKLPYRTVAEEYSLEYGNAAVEMHTDSVRTGQRVLLVDDLIATGGTMLAAIKLLQRLGANVVEAAAIIDLPYLGGSAQITATGTPLYTVCQYQEGD.

It belongs to the purine/pyrimidine phosphoribosyltransferase family. In terms of assembly, homodimer.

Its subcellular location is the cytoplasm. The catalysed reaction is AMP + diphosphate = 5-phospho-alpha-D-ribose 1-diphosphate + adenine. It participates in purine metabolism; AMP biosynthesis via salvage pathway; AMP from adenine: step 1/1. In terms of biological role, catalyzes a salvage reaction resulting in the formation of AMP, that is energically less costly than de novo synthesis. The protein is Adenine phosphoribosyltransferase of Bordetella bronchiseptica (strain ATCC BAA-588 / NCTC 13252 / RB50) (Alcaligenes bronchisepticus).